A 438-amino-acid polypeptide reads, in one-letter code: MDSTLISTRPDEGTLSLSRARRAALGSFAGAVVDWYDFLLYGITAALVFNREFFPQVSPAMGTLAAFATFGVGFLFRPLGGVIFGHFGDRLGRKRMLMLTVWMMGIATALIGILPSFSTIGWWAPILLVTLRAIQGFAVGGEWGGAALLSVESAPKNKKAFYSSGVQVGYGVGLLLSTGLVSLISMMTTDEQFLSWGWRIPFLFSIVLVLGALWVRNGMEESAEFEQQQHYQAAAKKRIPVIEALLRHPGAFLKIIALRLCELLTMYIVTAFALNYSTQNMGLPRELFLNIGLLVGGLSCLTIPCFAWLADRFGRRRVYITGTLIGTLSAFPFFMALEAQSIFWIVFFSIMLANIAHDMVVCVQQPMFTEMFGASYRYSGAGVGYQVASVVGGGFTPFIAAALITYFAGNWHSVAIYLLAGCLISAMTALLMKDSQRA.

The next 12 membrane-spanning stretches (helical) occupy residues 28 to 48 (FAGAVVDWYDFLLYGITAALV), 64 to 84 (LAAFATFGVGFLFRPLGGVIF), 109 to 129 (ALIGILPSFSTIGWWAPILLV), 133 to 153 (AIQGFAVGGEWGGAALLSVES), 168 to 188 (VGYGVGLLLSTGLVSLISMMT), 193 to 213 (FLSWGWRIPFLFSIVLVLGAL), 255 to 275 (IIALRLCELLTMYIVTAFALN), 287 to 307 (LFLNIGLLVGGLSCLTIPCFA), 318 to 337 (VYITGTLIGTLSAFPFFMAL), 341 to 363 (SIFWIVFFSIMLANIAHDMVVCV), 387 to 407 (VASVVGGGFTPFIAAALITYF), and 411 to 431 (WHSVAIYLLAGCLISAMTALL).

This sequence belongs to the major facilitator superfamily. Metabolite:H+ Symporter (MHS) family (TC 2.A.1.6) family.

It localises to the cell inner membrane. It catalyses the reaction shikimate(in) + H(+)(in) = shikimate(out) + H(+)(out). Functionally, involved in the uptake of shikimate, an intermediate in the aromatic amino acid biosynthetic pathway. The sequence is that of Shikimate transporter from Escherichia coli (strain K12).